A 1024-amino-acid polypeptide reads, in one-letter code: Beta-galactosidase (1024 aa).

N103 and D202 together coordinate substrate. Residue D202 participates in Na(+) binding. Residues E417, H419, and E462 each coordinate Mg(2+). Residues E462 and 538–541 each bind substrate; that span reads EYAH. E462 (proton donor) is an active-site residue. The active-site Nucleophile is the E538. N598 is a Mg(2+) binding site. 2 residues coordinate Na(+): F602 and N605. 2 residues coordinate substrate: N605 and W1000.

It belongs to the glycosyl hydrolase 2 family. As to quaternary structure, homotetramer. Requires Mg(2+) as cofactor. The cofactor is Na(+).

The catalysed reaction is Hydrolysis of terminal non-reducing beta-D-galactose residues in beta-D-galactosides.. The polypeptide is Beta-galactosidase (Escherichia coli O17:K52:H18 (strain UMN026 / ExPEC)).